The sequence spans 195 residues: 2-cysteine peroxiredoxin, chloroplastic (195 aa).

The Thioredoxin domain maps to 3 to 161; sequence IRVGQKAPDF…ALRTLQAIQY (159 aa). Catalysis depends on Cys-49, which acts as the Cysteine sulfenic acid (-SOH) intermediate.

Belongs to the peroxiredoxin family. AhpC/Prx1 subfamily. In terms of assembly, homodimer; disulfide-linked, upon oxidation.

The protein resides in the plastid. It localises to the chloroplast. It catalyses the reaction a hydroperoxide + [thioredoxin]-dithiol = an alcohol + [thioredoxin]-disulfide + H2O. Its function is as follows. Thiol-specific peroxidase that catalyzes the reduction of hydrogen peroxide and organic hydroperoxides to water and alcohols, respectively. Plays a role in cell protection against oxidative stress by detoxifying peroxides. The protein is 2-cysteine peroxiredoxin, chloroplastic of Chattonella marina var. antiqua (Red tide flagellate).